The sequence spans 688 residues: Lectin-domain containing receptor kinase VI.3 (688 aa).

Positions 1 to 14 (MLVLFLLLTIPTRA) are cleaved as a signal peptide. Residues 15–306 (QRTTTETPKT…KRGYNSQVLA (292 aa)) lie on the Extracellular side of the membrane. A legume-lectin like region spans residues 22–271 (PKTEFIFRGF…AHYVMGWSFS (250 aa)). A helical membrane pass occupies residues 307 to 327 (LIVALSGVTVILLALLFFFVM). The Cytoplasmic portion of the chain corresponds to 328–688 (YKKRLQQGEV…VSSSSVISGR (361 aa)). Residues 361-640 (FKENRIVGTG…LNGDDDVPEI (280 aa)) form the Protein kinase domain. ATP is bound by residues 367–375 (VGTGGFGTV) and K391. Catalysis depends on D490, which acts as the Proton acceptor. Residues 662-688 (VSSDRASSSVPSFSVTRVSSSSVISGR) form a disordered region.

In the C-terminal section; belongs to the protein kinase superfamily. Ser/Thr protein kinase family. The protein in the N-terminal section; belongs to the leguminous lectin family.

It localises to the cell membrane. The catalysed reaction is L-seryl-[protein] + ATP = O-phospho-L-seryl-[protein] + ADP + H(+). It carries out the reaction L-threonyl-[protein] + ATP = O-phospho-L-threonyl-[protein] + ADP + H(+). In terms of biological role, involved in negative regulation of abscisic acid response in seed germination. This chain is Lectin-domain containing receptor kinase VI.3 (LECRK63), found in Arabidopsis thaliana (Mouse-ear cress).